The primary structure comprises 129 residues: Glycerol-3-phosphate cytidylyltransferase (129 aa).

CTP-binding positions include Thr-9 to Phe-10 and His-14 to His-17. Lys-44 is a substrate binding site. Lys-46 lines the CTP pocket. Position 77 (Lys-77) interacts with substrate. Arg-113 to Thr-120 is a binding site for CTP.

It belongs to the cytidylyltransferase family. Homodimer.

It is found in the cytoplasm. It catalyses the reaction sn-glycerol 3-phosphate + CTP + H(+) = CDP-glycerol + diphosphate. The protein operates within cell wall biogenesis; poly(ribitol phosphate) teichoic acid biosynthesis. Functionally, catalyzes the transfer of the cytidylyl group of CTP to sn-glycerol 3-phosphate so the activated glycerol 3-phosphate can be used for teichoic acid synthesis, via incorporation into both the linkage unit by TarB and TarF. The polypeptide is Glycerol-3-phosphate cytidylyltransferase (tarD) (Bacillus spizizenii (strain ATCC 23059 / NRRL B-14472 / W23) (Bacillus subtilis subsp. spizizenii)).